A 388-amino-acid polypeptide reads, in one-letter code: Alanine racemase 2 (388 aa).

Lysine 39 (proton acceptor; specific for D-alanine) is an active-site residue. Lysine 39 is subject to N6-(pyridoxal phosphate)lysine. Residue arginine 137 coordinates substrate. Catalysis depends on tyrosine 267, which acts as the Proton acceptor; specific for L-alanine. A substrate-binding site is contributed by methionine 315.

The protein belongs to the alanine racemase family. The cofactor is pyridoxal 5'-phosphate.

It carries out the reaction L-alanine = D-alanine. It functions in the pathway amino-acid biosynthesis; D-alanine biosynthesis; D-alanine from L-alanine: step 1/1. Its function is as follows. Catalyzes the interconversion of L-alanine and D-alanine. May also act on other amino acids. The polypeptide is Alanine racemase 2 (alr2) (Caldanaerobacter subterraneus subsp. tengcongensis (strain DSM 15242 / JCM 11007 / NBRC 100824 / MB4) (Thermoanaerobacter tengcongensis)).